We begin with the raw amino-acid sequence, 575 residues long: Lysine--tRNA ligase (575 aa).

Glutamate 412 and glutamate 419 together coordinate Mg(2+).

This sequence belongs to the class-II aminoacyl-tRNA synthetase family. As to quaternary structure, homodimer. It depends on Mg(2+) as a cofactor.

It is found in the cytoplasm. The enzyme catalyses tRNA(Lys) + L-lysine + ATP = L-lysyl-tRNA(Lys) + AMP + diphosphate. The sequence is that of Lysine--tRNA ligase from Bacteroides fragilis (strain YCH46).